Here is a 398-residue protein sequence, read N- to C-terminus: Acetate kinase 1 (398 aa).

Asparagine 9 is a binding site for Mg(2+). Lysine 16 provides a ligand contact to ATP. Arginine 89 provides a ligand contact to substrate. The active-site Proton donor/acceptor is the aspartate 146. ATP-binding positions include 206–210, 281–283, and 329–333; these read HLGNG, DCR, and GIGEN. A Mg(2+)-binding site is contributed by glutamate 384.

The protein belongs to the acetokinase family. Homodimer. Mg(2+) is required as a cofactor. Mn(2+) serves as cofactor.

It localises to the cytoplasm. The catalysed reaction is acetate + ATP = acetyl phosphate + ADP. The protein operates within metabolic intermediate biosynthesis; acetyl-CoA biosynthesis; acetyl-CoA from acetate: step 1/2. In terms of biological role, catalyzes the formation of acetyl phosphate from acetate and ATP. Can also catalyze the reverse reaction. This chain is Acetate kinase 1, found in Vibrio parahaemolyticus serotype O3:K6 (strain RIMD 2210633).